Consider the following 271-residue polypeptide: Glutamate racemase (271 aa).

Residues 10 to 11 and 42 to 43 each bind substrate; these read DS and YG. The Proton donor/acceptor role is filled by cysteine 73. 74–75 provides a ligand contact to substrate; it reads NT. The active-site Proton donor/acceptor is cysteine 183. Residue 184–185 coordinates substrate; that stretch reads TH.

It belongs to the aspartate/glutamate racemases family.

It catalyses the reaction L-glutamate = D-glutamate. It participates in cell wall biogenesis; peptidoglycan biosynthesis. In terms of biological role, provides the (R)-glutamate required for cell wall biosynthesis. The chain is Glutamate racemase from Streptococcus thermophilus (strain CNRZ 1066).